We begin with the raw amino-acid sequence, 345 residues long: tRNA N6-adenosine threonylcarbamoyltransferase (345 aa).

Positions 111 and 115 each coordinate Fe cation. Substrate contacts are provided by residues 134–138, D167, G180, D184, and N278; that span reads LVSGG. D306 contributes to the Fe cation binding site.

This sequence belongs to the KAE1 / TsaD family. Requires Fe(2+) as cofactor.

The protein localises to the cytoplasm. The catalysed reaction is L-threonylcarbamoyladenylate + adenosine(37) in tRNA = N(6)-L-threonylcarbamoyladenosine(37) in tRNA + AMP + H(+). In terms of biological role, required for the formation of a threonylcarbamoyl group on adenosine at position 37 (t(6)A37) in tRNAs that read codons beginning with adenine. Is involved in the transfer of the threonylcarbamoyl moiety of threonylcarbamoyl-AMP (TC-AMP) to the N6 group of A37, together with TsaE and TsaB. TsaD likely plays a direct catalytic role in this reaction. The polypeptide is tRNA N6-adenosine threonylcarbamoyltransferase (Cyanothece sp. (strain PCC 7425 / ATCC 29141)).